A 273-amino-acid polypeptide reads, in one-letter code: DnaJ homolog subfamily C member 27 (273 aa).

Positions 1–18 (MEASMPKRKEPGKSLRIK) are required for interaction with MAPK1. GTP is bound by residues 23–30 (GNAEVGKS), 71–75 (DMAGD), and 134–137 (NKID). One can recognise a J domain in the interval 217–273 (DSWDMLGVKPGASRDEVNKAYRKLAVLLHPDKCVAPGSEDAFKAVVNARTALLKNIK).

Belongs to the small GTPase superfamily. Rab family. As to quaternary structure, interacts directly with MAPK1 (wild-type and kinase-deficient forms). Interacts directly (in GTP-bound form) with MAP2K1 (wild-type and kinase-deficient forms).

The protein resides in the nucleus. Functionally, GTPase which can activate the MEK/ERK pathway and induce cell transformation when overexpressed. May act as a nuclear scaffold for MAPK1, probably by association with MAPK1 nuclear export signal leading to enhanced ERK1/ERK2 signaling. This chain is DnaJ homolog subfamily C member 27 (DNAJC27), found in Bos taurus (Bovine).